The chain runs to 142 residues: Large ribosomal subunit protein uL13 (142 aa).

The protein belongs to the universal ribosomal protein uL13 family. In terms of assembly, part of the 50S ribosomal subunit.

Functionally, this protein is one of the early assembly proteins of the 50S ribosomal subunit, although it is not seen to bind rRNA by itself. It is important during the early stages of 50S assembly. In Shewanella oneidensis (strain ATCC 700550 / JCM 31522 / CIP 106686 / LMG 19005 / NCIMB 14063 / MR-1), this protein is Large ribosomal subunit protein uL13.